A 192-amino-acid polypeptide reads, in one-letter code: Glutaredoxin-C9 (192 aa).

A Glutaredoxin domain is found at 89-191 (YERVARMASG…PLLKQAGALW (103 aa)). C109 and C112 are disulfide-bonded. The short motif at 189–192 (ALWL) is the Responsive for interaction with TGA factors element.

The protein belongs to the glutaredoxin family. CC-type subfamily.

The protein resides in the cytoplasm. It localises to the nucleus. Functionally, has a glutathione-disulfide oxidoreductase activity in the presence of NADPH and glutathione reductase. Reduces low molecular weight disulfides and proteins. In Oryza sativa subsp. japonica (Rice), this protein is Glutaredoxin-C9 (GRXC9).